Consider the following 485-residue polypeptide: Glutamyl-tRNA(Gln) amidotransferase subunit A (485 aa).

Active-site charge relay system residues include K79 and S154. S178 functions as the Acyl-ester intermediate in the catalytic mechanism.

It belongs to the amidase family. GatA subfamily. Heterotrimer of A, B and C subunits.

It catalyses the reaction L-glutamyl-tRNA(Gln) + L-glutamine + ATP + H2O = L-glutaminyl-tRNA(Gln) + L-glutamate + ADP + phosphate + H(+). In terms of biological role, allows the formation of correctly charged Gln-tRNA(Gln) through the transamidation of misacylated Glu-tRNA(Gln) in organisms which lack glutaminyl-tRNA synthetase. The reaction takes place in the presence of glutamine and ATP through an activated gamma-phospho-Glu-tRNA(Gln). The sequence is that of Glutamyl-tRNA(Gln) amidotransferase subunit A from Geobacillus kaustophilus (strain HTA426).